The primary structure comprises 85 residues: Cloacin immunity protein (85 aa).

Lysine 12 carries the post-translational modification N6-methyllysine.

This sequence belongs to the cloacin immunity protein family.

Functionally, this protein complexes with cloacin protein in equimolar amounts and inhibits it by binding with high affinity to the C-terminal catalytic domain of cloacin. This chain is Cloacin immunity protein (cim), found in Escherichia coli.